Here is a 128-residue protein sequence, read N- to C-terminus: Protein C10 (128 aa).

Belongs to the UPF0456 family.

It is found in the cytoplasm. The chain is Protein C10 from Xenopus laevis (African clawed frog).